Here is a 193-residue protein sequence, read N- to C-terminus: Large ribosomal subunit protein uL5 (193 aa).

The protein belongs to the universal ribosomal protein uL5 family. In terms of assembly, part of the 50S ribosomal subunit; part of the 5S rRNA/L5/L18/L25 subcomplex. Contacts the 5S rRNA and the P site tRNA. Forms a bridge to the 30S subunit in the 70S ribosome.

This is one of the proteins that bind and probably mediate the attachment of the 5S RNA into the large ribosomal subunit, where it forms part of the central protuberance. In the 70S ribosome it contacts protein S13 of the 30S subunit (bridge B1b), connecting the 2 subunits; this bridge is implicated in subunit movement. Contacts the P site tRNA; the 5S rRNA and some of its associated proteins might help stabilize positioning of ribosome-bound tRNAs. This is Large ribosomal subunit protein uL5 from Novosphingobium aromaticivorans (strain ATCC 700278 / DSM 12444 / CCUG 56034 / CIP 105152 / NBRC 16084 / F199).